The chain runs to 993 residues: Testis-expressed protein 13C (993 aa).

3 disordered regions span residues 281 to 381 (QEET…SLKK), 520 to 547 (DSKSHRMKKDPVMPQKMVPLGDSRSHSL), and 894 to 959 (FSKS…PVNW). A compositionally biased stretch (polar residues) spans 325 to 335 (GMTSQGDSSSH). Basic and acidic residues predominate over residues 353–364 (SRSHSLEKKPVM). The span at 944-957 (ESQQQKPASCSSPV) shows a compositional bias: polar residues. The RanBP2-type zinc-finger motif lies at 955 to 984 (SPVNWACPWCNAMNFPRNKVCSKCKRVRMP).

Belongs to the TEX13 family.

The sequence is that of Testis-expressed protein 13C from Homo sapiens (Human).